Here is a 473-residue protein sequence, read N- to C-terminus: Photosystem II CP43 reaction center protein (473 aa).

Positions 1–14 (MKTLYSLRRFYHVE) are excised as a propeptide. Residue Thr-15 is modified to N-acetylthreonine. Thr-15 is subject to Phosphothreonine. Helical transmembrane passes span 69-93 (LFEV…PHLA), 134-155 (LLGP…KDRN), 178-200 (KALY…RKIT), 255-275 (KPFA…LSYS), and 291-312 (WFNN…ASQA). Position 367 (Glu-367) interacts with [CaMn4O5] cluster. A helical membrane pass occupies residues 447 to 471 (RARAAAAGFEKGIDRDFEPVLSMTP).

The protein belongs to the PsbB/PsbC family. PsbC subfamily. As to quaternary structure, PSII is composed of 1 copy each of membrane proteins PsbA, PsbB, PsbC, PsbD, PsbE, PsbF, PsbH, PsbI, PsbJ, PsbK, PsbL, PsbM, PsbT, PsbX, PsbY, PsbZ, Psb30/Ycf12, at least 3 peripheral proteins of the oxygen-evolving complex and a large number of cofactors. It forms dimeric complexes. Binds multiple chlorophylls and provides some of the ligands for the Ca-4Mn-5O cluster of the oxygen-evolving complex. It may also provide a ligand for a Cl- that is required for oxygen evolution. PSII binds additional chlorophylls, carotenoids and specific lipids. is required as a cofactor.

It localises to the plastid. It is found in the chloroplast thylakoid membrane. Functionally, one of the components of the core complex of photosystem II (PSII). It binds chlorophyll and helps catalyze the primary light-induced photochemical processes of PSII. PSII is a light-driven water:plastoquinone oxidoreductase, using light energy to abstract electrons from H(2)O, generating O(2) and a proton gradient subsequently used for ATP formation. In Chloranthus spicatus (Chulantree), this protein is Photosystem II CP43 reaction center protein.